A 572-amino-acid chain; its full sequence is Arginine--tRNA ligase (572 aa).

A 'HIGH' region motif is present at residues 122–132; sequence PNLAKEMHVGH.

This sequence belongs to the class-I aminoacyl-tRNA synthetase family. In terms of assembly, monomer.

The protein resides in the cytoplasm. The catalysed reaction is tRNA(Arg) + L-arginine + ATP = L-arginyl-tRNA(Arg) + AMP + diphosphate. The chain is Arginine--tRNA ligase from Neisseria gonorrhoeae (strain NCCP11945).